The chain runs to 183 residues: Ankyrin repeat domain-containing protein 39 (183 aa).

ANK repeat units lie at residues 30 to 59 (DFERGIWSAALNGDLGRVKYLIQKAVDPSQ), 63 to 92 (AGYTALHYASRNGHYAVCQFLLESGAKCDA), 96 to 125 (GGATALHRASYCGHTDIARLLLSHGSNPRL), and 129 to 158 (DGMTSLHKAAEKGHVDICSLLLQHSPALKA). Ser153 carries the phosphoserine modification.

The protein belongs to the ANKRD39 family.

This is Ankyrin repeat domain-containing protein 39 (ANKRD39) from Bos taurus (Bovine).